Here is a 717-residue protein sequence, read N- to C-terminus: uncharacterized protein (717 aa).

Belongs to the asfivirus C717R family.

Its subcellular location is the virion. This is an uncharacterized protein from Ornithodoros (relapsing fever ticks).